We begin with the raw amino-acid sequence, 316 residues long: D-alanine--D-alanine ligase (316 aa).

Positions 104 to 303 constitute an ATP-grasp domain; it reads KRVWLQHGLP…YADLCVAILA (200 aa). 130-185 lines the ATP pocket; the sequence is PDRLGLPLILKPPHEGSTVGITKVAGYSDMKAAYELAARFDAEVLAEQFITGRELT. Mg(2+)-binding residues include Asp-257, Glu-270, and Asn-272.

The protein belongs to the D-alanine--D-alanine ligase family. Mg(2+) is required as a cofactor. Requires Mn(2+) as cofactor.

The protein localises to the cytoplasm. It catalyses the reaction 2 D-alanine + ATP = D-alanyl-D-alanine + ADP + phosphate + H(+). Its pathway is cell wall biogenesis; peptidoglycan biosynthesis. In terms of biological role, cell wall formation. This chain is D-alanine--D-alanine ligase, found in Bordetella parapertussis (strain 12822 / ATCC BAA-587 / NCTC 13253).